A 145-amino-acid polypeptide reads, in one-letter code: Transcription factor MEE8 (145 aa).

A compositionally biased stretch (basic and acidic residues) spans 33–49; sequence EKGVEKVGQKRSAESRR. The tract at residues 33 to 61 is disordered; that stretch reads EKGVEKVGQKRSAESRREGKKKRVKTQCV. Positions 66 to 115 constitute a bHLH domain; that stretch reads DKSDHDTLLKKKRRERIRRQLETLKEITPNCPQSDINAILDCVIEYTNNL.

Homodimer.

The protein localises to the nucleus. Its function is as follows. Required during early embryo development, for the endosperm formation. The sequence is that of Transcription factor MEE8 (MEE8) from Arabidopsis thaliana (Mouse-ear cress).